The chain runs to 395 residues: Receptor-like cytoplasmic kinase 176 (395 aa).

Residues methionine 1 to serine 45 are disordered. Low complexity-rich tracts occupy residues serine 10–serine 22 and alanine 29–valine 39. Residues phenylalanine 70–leucine 355 form the Protein kinase domain. ATP-binding positions include leucine 76–valine 84 and lysine 108. The active-site Proton acceptor is aspartate 205. The segment at lysine 359 to valine 395 is disordered. Low complexity predominate over residues lysine 369–valine 395.

Belongs to the protein kinase superfamily. Ser/Thr protein kinase family. As to quaternary structure, interacts with CERK1.

It carries out the reaction L-seryl-[protein] + ATP = O-phospho-L-seryl-[protein] + ADP + H(+). It catalyses the reaction L-threonyl-[protein] + ATP = O-phospho-L-threonyl-[protein] + ADP + H(+). Functions downstream of CERK1 in the microbial peptidoglycans (PGNs) and fungal chitin signaling pathways that mediate innate immunity. Participates in the activation of defense genes during response to PGN and chitin. This chain is Receptor-like cytoplasmic kinase 176, found in Oryza sativa subsp. japonica (Rice).